The following is a 171-amino-acid chain: uncharacterized protein (171 aa).

The first 20 residues, Met1 to Ala20, serve as a signal peptide directing secretion.

This is an uncharacterized protein from Aquifex aeolicus (strain VF5).